Here is a 456-residue protein sequence, read N- to C-terminus: Bifunctional protein GlmU (456 aa).

The pyrophosphorylase stretch occupies residues 1–229 (MLNNTMSVVI…ISETDGVNNR (229 aa)). UDP-N-acetyl-alpha-D-glucosamine-binding positions include 11–14 (LAAG), Lys-25, Gln-76, 81–82 (GT), 103–105 (YGD), Gly-140, Glu-154, Asn-169, and Asn-227. Asp-105 is a Mg(2+) binding site. Asn-227 is a binding site for Mg(2+). A linker region spans residues 230-250 (LQLSRLERIYQAEQAEKLLLA). Residues 251 to 456 (GVMLRDPARF…QGWQRPVKKK (206 aa)) form an N-acetyltransferase region. Positions 333 and 351 each coordinate UDP-N-acetyl-alpha-D-glucosamine. His-363 (proton acceptor) is an active-site residue. Residues Tyr-366 and Asn-377 each coordinate UDP-N-acetyl-alpha-D-glucosamine. Acetyl-CoA contacts are provided by residues Ala-380, 386 to 387 (NY), Ser-405, Ala-423, and Arg-440.

This sequence in the N-terminal section; belongs to the N-acetylglucosamine-1-phosphate uridyltransferase family. The protein in the C-terminal section; belongs to the transferase hexapeptide repeat family. As to quaternary structure, homotrimer. It depends on Mg(2+) as a cofactor.

It is found in the cytoplasm. The catalysed reaction is alpha-D-glucosamine 1-phosphate + acetyl-CoA = N-acetyl-alpha-D-glucosamine 1-phosphate + CoA + H(+). The enzyme catalyses N-acetyl-alpha-D-glucosamine 1-phosphate + UTP + H(+) = UDP-N-acetyl-alpha-D-glucosamine + diphosphate. Its pathway is nucleotide-sugar biosynthesis; UDP-N-acetyl-alpha-D-glucosamine biosynthesis; N-acetyl-alpha-D-glucosamine 1-phosphate from alpha-D-glucosamine 6-phosphate (route II): step 2/2. It functions in the pathway nucleotide-sugar biosynthesis; UDP-N-acetyl-alpha-D-glucosamine biosynthesis; UDP-N-acetyl-alpha-D-glucosamine from N-acetyl-alpha-D-glucosamine 1-phosphate: step 1/1. The protein operates within bacterial outer membrane biogenesis; LPS lipid A biosynthesis. Its function is as follows. Catalyzes the last two sequential reactions in the de novo biosynthetic pathway for UDP-N-acetylglucosamine (UDP-GlcNAc). The C-terminal domain catalyzes the transfer of acetyl group from acetyl coenzyme A to glucosamine-1-phosphate (GlcN-1-P) to produce N-acetylglucosamine-1-phosphate (GlcNAc-1-P), which is converted into UDP-GlcNAc by the transfer of uridine 5-monophosphate (from uridine 5-triphosphate), a reaction catalyzed by the N-terminal domain. In Enterobacter sp. (strain 638), this protein is Bifunctional protein GlmU.